A 411-amino-acid chain; its full sequence is Probable protein S-acyltransferase 2 (411 aa).

2 consecutive transmembrane segments (helical) span residues 56–76 (LTTA…VFLI) and 85–105 (SLIL…LFLT). In terms of domain architecture, DHHC spans 160–210 (KFCDTCLLYRPPRASHCSICNNCVQRFDHHCPWVGQCIALRNYPYFICFIS). Cysteine 190 (S-palmitoyl cysteine intermediate) is an active-site residue. 2 helical membrane-spanning segments follow: residues 205–225 (FICF…FSWV) and 245–265 (FVVL…LTVF). Serine 405 carries the phosphoserine modification.

The protein belongs to the DHHC palmitoyltransferase family. In terms of tissue distribution, expressed in flowers and pollen.

The protein localises to the cytoplasmic vesicle membrane. The catalysed reaction is L-cysteinyl-[protein] + hexadecanoyl-CoA = S-hexadecanoyl-L-cysteinyl-[protein] + CoA. In terms of biological role, palmitoyl acyltransferase. The polypeptide is Probable protein S-acyltransferase 2 (PAT02) (Arabidopsis thaliana (Mouse-ear cress)).